A 284-amino-acid polypeptide reads, in one-letter code: D-tagatose-1,6-bisphosphate aldolase subunit GatY (284 aa).

The Proton donor role is filled by Asp82. Residues His83 and His180 each coordinate Zn(2+). Gly181 serves as a coordination point for dihydroxyacetone phosphate. His208 is a Zn(2+) binding site. Residues 209–211 (GAS) and 230–233 (NVAT) contribute to the dihydroxyacetone phosphate site.

It belongs to the class II fructose-bisphosphate aldolase family. TagBP aldolase GatY subfamily. In terms of assembly, forms a complex with GatZ. The cofactor is Zn(2+).

It carries out the reaction D-tagatofuranose 1,6-bisphosphate = D-glyceraldehyde 3-phosphate + dihydroxyacetone phosphate. The protein operates within carbohydrate metabolism; D-tagatose 6-phosphate degradation; D-glyceraldehyde 3-phosphate and glycerone phosphate from D-tagatose 6-phosphate: step 2/2. In terms of biological role, catalytic subunit of the tagatose-1,6-bisphosphate aldolase GatYZ, which catalyzes the reversible aldol condensation of dihydroxyacetone phosphate (DHAP or glycerone-phosphate) with glyceraldehyde 3-phosphate (G3P) to produce tagatose 1,6-bisphosphate (TBP). Requires GatZ subunit for full activity and stability. Is involved in the catabolism of galactitol. The chain is D-tagatose-1,6-bisphosphate aldolase subunit GatY from Escherichia coli O17:K52:H18 (strain UMN026 / ExPEC).